The primary structure comprises 629 residues: ATP-dependent RNA helicase DBP6 (629 aa).

A disordered region spans residues 1-129 (MFASRFDPSQ…GIEDEAASTH (129 aa)). The span at 72 to 84 (ASEEDSSEVEEEE) shows a compositional bias: acidic residues. A phosphoserine mark is found at Ser73, Ser77, and Ser78. Polar residues predominate over residues 88–103 (STHSTVLSRFKQTVSL). The segment covering 116–125 (KEDEGIEDEA) has biased composition (acidic residues). Positions 197–205 (TFPIQSIIL) match the Q motif motif. The Helicase ATP-binding domain maps to 221–401 (RNFTRRIGDI…GLNLYKPKLF (181 aa)). Position 234–241 (234–241 (AATGSGKT)) interacts with ATP. Positions 341–344 (DEAD) match the DEAD box motif. One can recognise a Helicase C-terminal domain in the interval 437–603 (SICQFMAHSP…SVQPLELDFT (167 aa)).

The protein belongs to the DEAD box helicase family. DDX51/DBP6 subfamily. In terms of assembly, associated with pre-ribosomal particles. Interacts with DBP9 and RSA3. Together with NOP8, URB1, URB2 and RSA3, forms an RNA-independent complex, which is required during early maturation of nascent 60S ribosomal subunits.

The protein resides in the nucleus. It localises to the nucleolus. The catalysed reaction is ATP + H2O = ADP + phosphate + H(+). In terms of biological role, ATP-binding RNA helicase involved in the biogenesis of 60S ribosomal subunits and is required for the normal formation of 25S and 5.8S rRNAs. The polypeptide is ATP-dependent RNA helicase DBP6 (DBP6) (Saccharomyces cerevisiae (strain ATCC 204508 / S288c) (Baker's yeast)).